Reading from the N-terminus, the 448-residue chain is ATP synthase subunit b-delta (448 aa).

Positions 1 to 168 are ATP synthase subunit b; the sequence is MSTFIGQLIG…GSVGAAKRPV (168 aa). Residues 4-24 traverse the membrane as a helical segment; sequence FIGQLIGFAVIVFLVVKYVVP. An ATP synthase subunit delta region spans residues 169–448; it reads PGGYSGMHAA…LSAAALHLPN (280 aa).

It in the N-terminal section; belongs to the ATPase B chain family. The protein in the C-terminal section; belongs to the ATPase delta chain family. In terms of assembly, F-type ATPases have 2 components, F(1) - the catalytic core - and F(0) - the membrane proton channel. F(1) has five subunits: alpha(3), beta(3), gamma(1), delta(1), epsilon(1). F(0) has three main subunits: a(1), b(2) and c(10-14). The alpha and beta chains form an alternating ring which encloses part of the gamma chain. F(1) is attached to F(0) by a central stalk formed by the gamma and epsilon chains, while a peripheral stalk is formed by the delta and b chains.

It localises to the cell membrane. Its function is as follows. F(1)F(0) ATP synthase produces ATP from ADP in the presence of a proton or sodium gradient. F-type ATPases consist of two structural domains, F(1) containing the extramembraneous catalytic core and F(0) containing the membrane proton channel, linked together by a central stalk and a peripheral stalk. During catalysis, ATP synthesis in the catalytic domain of F(1) is coupled via a rotary mechanism of the central stalk subunits to proton translocation. In terms of biological role, this fusion protein includes a component of the F(0) channel (subunit b) and of the F(1) subunit (subunit delta). Two copies of subunit b and one of delta together form the peripheral 'stator' stalk which links F(1) to F(0). The polypeptide is ATP synthase subunit b-delta (atpFH) (Mycobacteroides abscessus (strain ATCC 19977 / DSM 44196 / CCUG 20993 / CIP 104536 / JCM 13569 / NCTC 13031 / TMC 1543 / L948) (Mycobacterium abscessus)).